A 171-amino-acid chain; its full sequence is Stage III sporulation protein AB (171 aa).

This chain is Stage III sporulation protein AB (spoIIIAB), found in Bacillus subtilis (strain 168).